A 50-amino-acid chain; its full sequence is Sperm protamine P1 (50 aa).

2 cysteine pairs are disulfide-bonded: C7–C15 and C39–C47.

It belongs to the protamine P1 family. Cross-linked by interchain disulfide bonds around the DNA-helix. In terms of tissue distribution, testis.

Its subcellular location is the nucleus. It is found in the chromosome. Its function is as follows. Protamines substitute for histones in the chromatin of sperm during the haploid phase of spermatogenesis. They compact sperm DNA into a highly condensed, stable and inactive complex. The chain is Sperm protamine P1 (PRM1) from Sus scrofa (Pig).